We begin with the raw amino-acid sequence, 359 residues long: Sulfate/thiosulfate import ATP-binding protein CysA (359 aa).

In terms of domain architecture, ABC transporter spans 3–237; sequence VRVAGVRKEF…PNSPFVYGFI (235 aa). 35-42 serves as a coordination point for ATP; it reads GPSGSGKT.

Belongs to the ABC transporter superfamily. Sulfate/tungstate importer (TC 3.A.1.6) family. In terms of assembly, the complex is composed of two ATP-binding proteins (CysA), two transmembrane proteins (CysT and CysW) and a solute-binding protein (CysP).

The protein localises to the cell inner membrane. It catalyses the reaction sulfate(out) + ATP + H2O = sulfate(in) + ADP + phosphate + H(+). The enzyme catalyses thiosulfate(out) + ATP + H2O = thiosulfate(in) + ADP + phosphate + H(+). Functionally, part of the ABC transporter complex CysAWTP involved in sulfate/thiosulfate import. Responsible for energy coupling to the transport system. This is Sulfate/thiosulfate import ATP-binding protein CysA from Brucella melitensis biotype 1 (strain ATCC 23456 / CCUG 17765 / NCTC 10094 / 16M).